We begin with the raw amino-acid sequence, 566 residues long: Deformed epidermal autoregulatory factor 1 homolog (566 aa).

Disordered regions lie at residues 33–62 (AESE…ETRR) and 163–191 (GLKG…KGGT). Residues 170–182 (PLTPGPQSPPTPL) are compositionally biased toward pro residues. At Thr-172 the chain carries Phosphothreonine. Ser-177 bears the Phosphoserine mark. Residue Thr-180 is modified to Phosphothreonine. One can recognise an SAND domain in the interval 194–274 (NWDPSVYDSE…QCLIQDGILN (81 aa)). The Nuclear localization signal signature appears at 300-306 (PYKRRKK). Residues 404–479 (IAPFPEAALP…QLKTLFEQAK (76 aa)) are interaction with LMO4. Thr-433 carries the post-translational modification Phosphothreonine. Phosphoserine occurs at positions 444 and 449. Zn(2+)-binding residues include Cys-505, Cys-508, Cys-516, Cys-519, Cys-525, Cys-529, His-537, and Cys-541. The segment at 505 to 541 (CVNCGREAMSECTGCHKVNYCSTFCQRKDWKDHQHVC) adopts an MYND-type zinc-finger fold.

As to quaternary structure, homodimer. Isoform 1 and isoform 2 may form a heterodimer. May interact with the corepressors NCOR1 and NCRO2. Identified in a complex with XRCC5 and XRCC6. Interacts (via the SAND domain) with the DNA-PK complex subunit XRCC6; the interaction is direct with XRCC6 and may be inhibited by DNA-binding. Interacts with LMO4; LMO4 blocks export from nucleus. Interacts with LMO2 and CLIM2. In terms of processing, may be phosphorylated by DNA-PK complex in a DNA independent manner (in vitro). In terms of tissue distribution, ubiquitously expressed during embryogenesis, with higher expression in regions of the central nervous system, dorsal root ganglia, submandibular gland, epidermis and breast. In 12-week-old NOD mice, expression of isoform 2 is sevenfold higher in lymph node stromal elements than in T-cells and tenfold higher than in B-cells.

The protein resides in the nucleus. The protein localises to the cytoplasm. Its function is as follows. Transcription factor that binds to sequence with multiple copies of 5'-TTC[CG]G-3' present in its own promoter and that of the HNRPA2B1 gene. Down-regulates transcription of these genes. Binds to the retinoic acid response element (RARE) 5'-AGGGTTCACCGAAAGTTCA-3'. Activates the proenkephalin gene independently of promoter binding, probably through protein-protein interaction. Regulates epithelial cell proliferation and side-branching in the mammary gland. Required for neural tube closure and skeletal patterning. Controls the expression of peripheral tissue antigens in pancreatic lymph nodes. Isoform 1 displays greater transcriptional activity than isoform 2. Isoform 2 may inhibit transcriptional activity of isoform 1 by interacting with it and retaining it in the cytoplasm. Transcriptional activator of EIF4G3. May also involved in behavior. This Mus musculus (Mouse) protein is Deformed epidermal autoregulatory factor 1 homolog (Deaf1).